Consider the following 92-residue polypeptide: PqqA binding protein (92 aa).

Belongs to the PqqD family. As to quaternary structure, monomer. Interacts with PqqE.

Its pathway is cofactor biosynthesis; pyrroloquinoline quinone biosynthesis. Its function is as follows. Functions as a PqqA binding protein and presents PqqA to PqqE, in the pyrroloquinoline quinone (PQQ) biosynthetic pathway. The sequence is that of PqqA binding protein from Xanthomonas euvesicatoria pv. vesicatoria (strain 85-10) (Xanthomonas campestris pv. vesicatoria).